The sequence spans 229 residues: Ribonuclease 3 (229 aa).

Positions 4–133 constitute an RNase III domain; the sequence is WEELQESVGF…FIGALYLDNG (130 aa). Residue Glu-46 coordinates Mg(2+). Asp-50 is a catalytic residue. The Mg(2+) site is built by Asp-119 and Glu-122. Glu-122 is a catalytic residue. The DRBM domain occupies 159 to 228; it reads DYKTQLQEIV…AQFAINQLTH (70 aa).

This sequence belongs to the ribonuclease III family. As to quaternary structure, homodimer. Mg(2+) is required as a cofactor.

Its subcellular location is the cytoplasm. The enzyme catalyses Endonucleolytic cleavage to 5'-phosphomonoester.. Digests double-stranded RNA. Involved in the processing of primary rRNA transcript to yield the immediate precursors to the large and small rRNAs (23S and 16S). Processes some mRNAs, and tRNAs when they are encoded in the rRNA operon. Processes pre-crRNA and tracrRNA of type II CRISPR loci if present in the organism. The protein is Ribonuclease 3 of Listeria monocytogenes serotype 4b (strain CLIP80459).